The following is a 57-amino-acid chain: Probable antitoxin MazE1 (57 aa).

As to quaternary structure, forms a complex with cognate toxin MazF1.

Its function is as follows. Antitoxin component of a type II toxin-antitoxin (TA) system. This Mycobacterium tuberculosis (strain ATCC 25618 / H37Rv) protein is Probable antitoxin MazE1 (mazE1).